We begin with the raw amino-acid sequence, 387 residues long: S-adenosylmethionine synthase (387 aa).

His-19 contributes to the ATP binding site. Mg(2+) is bound at residue Asp-21. Glu-47 contacts K(+). Gln-103 is a binding site for L-methionine. Residues 103–113 (QSPDIAQGVEL) are flexible loop. ATP-binding positions include 167-169 (DMK), 233-234 (RF), Asp-242, 248-249 (RK), Ala-265, and Lys-269. An L-methionine-binding site is contributed by Asp-242. Position 273 (Lys-273) interacts with L-methionine.

It belongs to the AdoMet synthase family. In terms of assembly, homotetramer; dimer of dimers. The cofactor is Mg(2+). K(+) serves as cofactor.

The protein localises to the cytoplasm. It catalyses the reaction L-methionine + ATP + H2O = S-adenosyl-L-methionine + phosphate + diphosphate. The protein operates within amino-acid biosynthesis; S-adenosyl-L-methionine biosynthesis; S-adenosyl-L-methionine from L-methionine: step 1/1. In terms of biological role, catalyzes the formation of S-adenosylmethionine (AdoMet) from methionine and ATP. The overall synthetic reaction is composed of two sequential steps, AdoMet formation and the subsequent tripolyphosphate hydrolysis which occurs prior to release of AdoMet from the enzyme. The protein is S-adenosylmethionine synthase of Mycoplasma capricolum subsp. capricolum (strain California kid / ATCC 27343 / NCTC 10154).